Here is a 521-residue protein sequence, read N- to C-terminus: Membrane-bound transcription factor site-2 protease (521 aa).

Residues 1-3 (MIP) are Cytoplasmic-facing. Residues 4–24 (VSLVVVVVGGWTVVYLTDLVL) traverse the membrane as a helical segment. Residues 25 to 74 (KSSVYFKHSYEDWLESNGLSISPFHIRWQTAVFNRAFYSWGRRKARMLYQ) lie on the Lumenal side of the membrane. The next 2 membrane-spanning stretches (helical) occupy residues 75–95 (WFNF…FLLG) and 96–107 (KTLMQTLAQMMA). The Lumenal segment spans residues 108 to 146 (DSPSSYSSSSSSSSSSSSSSSSSSSSSSSSSLHNEQVLQ). Residues 113–137 (YSSSSSSSSSSSSSSSSSSSSSSSS) form a disordered region. A helical membrane pass occupies residues 147–171 (VVVPGINLPVNQLTYFFAAVLISGV). His173 is a binding site for Zn(2+). Glu174 is an active-site residue. The next 3 membrane-spanning stretches (helical) occupy residues 176–188 (GHGI…QVRF), 189–211 (NGFG…TTHL), and 231–253 (FVLA…PFYY). His177 lines the Zn(2+) pocket. Residues 254–448 (TGVGVLITEV…LPVVVETFVK (195 aa)) lie on the Lumenal side of the membrane. Asn339 is a glycosylation site (N-linked (GlcNAc...) asparagine). Transmembrane regions (helical) follow at residues 449-466 (YLIS…VPCF) and 467-478 (ALDGQWILNSFL). Residues 479-494 (DATLTSVIGDNDVKDL) lie on the Lumenal side of the membrane. The chain crosses the membrane as a helical span at residues 495-515 (IGFFILLGGSVLLAANVTLGL). The Cytoplasmic portion of the chain corresponds to 516–521 (WMVTAR).

It belongs to the peptidase M50A family. It depends on Zn(2+) as a cofactor.

The protein localises to the membrane. Its subcellular location is the cytoplasm. The protein resides in the golgi apparatus membrane. The enzyme catalyses Cleaves several transcription factors that are type-2 transmembrane proteins within membrane-spanning domains. Known substrates include sterol regulatory element-binding protein (SREBP) -1, SREBP-2 and forms of the transcriptional activator ATF6. SREBP-2 is cleaved at the site 477-DRSRILL-|-CVLTFLCLSFNPLTSLLQWGGA-505. The residues Asn-Pro, 11 residues distal to the site of cleavage in the membrane-spanning domain, are important for cleavage by S2P endopeptidase. Replacement of either of these residues does not prevent cleavage, but there is no cleavage if both of these residues are replaced.. Functionally, zinc metalloprotease that mediates intramembrane proteolysis of proteins such as ATF6, ATF6B, SREBF1/SREBP1 and SREBF2/SREBP2. Catalyzes the second step in the proteolytic activation of the sterol regulatory element-binding proteins (SREBPs) SREBF1/SREBP1 and SREBF2/SREBP2: cleaves SREBPs within the first transmembrane segment, thereby releasing the N-terminal segment with a portion of the transmembrane segment attached. Mature N-terminal SREBP fragments shuttle to the nucleus and activate gene transcription. Also mediates the second step in the proteolytic activation of the cyclic AMP-dependent transcription factor ATF-6 (ATF6 and ATF6B). Involved in intramembrane proteolysis during bone formation. In astrocytes and osteoblasts, upon DNA damage and ER stress, mediates the second step of the regulated intramembrane proteolytic activation of the transcription factor CREB3L1, leading to the inhibition of cell-cycle progression. The polypeptide is Membrane-bound transcription factor site-2 protease (MBTPS2) (Pongo abelii (Sumatran orangutan)).